The sequence spans 121 residues: MARIAGVDIPNDKRVVVSLTYVYGIGLPTSKKILAAAGVSEDIRVKDLTIEQEDAIRREVDAIKVEGDLRREVNLNIKRLMEIGSYRGIRHRRGLPVRGQNTKNNARTRKGKAVAIAGKKK.

The disordered stretch occupies residues 94 to 121 (GLPVRGQNTKNNARTRKGKAVAIAGKKK). Residues 106 to 121 (ARTRKGKAVAIAGKKK) show a composition bias toward basic residues.

It belongs to the universal ribosomal protein uS13 family. As to quaternary structure, part of the 30S ribosomal subunit. Forms a loose heterodimer with protein S19. Forms two bridges to the 50S subunit in the 70S ribosome.

Located at the top of the head of the 30S subunit, it contacts several helices of the 16S rRNA. In the 70S ribosome it contacts the 23S rRNA (bridge B1a) and protein L5 of the 50S subunit (bridge B1b), connecting the 2 subunits; these bridges are implicated in subunit movement. Contacts the tRNAs in the A and P-sites. The sequence is that of Small ribosomal subunit protein uS13 from Streptococcus sanguinis (strain SK36).